We begin with the raw amino-acid sequence, 181 residues long: ATP synthase subunit delta (181 aa).

This sequence belongs to the ATPase delta chain family. As to quaternary structure, F-type ATPases have 2 components, F(1) - the catalytic core - and F(0) - the membrane proton channel. F(1) has five subunits: alpha(3), beta(3), gamma(1), delta(1), epsilon(1). F(0) has three main subunits: a(1), b(2) and c(10-14). The alpha and beta chains form an alternating ring which encloses part of the gamma chain. F(1) is attached to F(0) by a central stalk formed by the gamma and epsilon chains, while a peripheral stalk is formed by the delta and b chains.

It localises to the cell membrane. Functionally, f(1)F(0) ATP synthase produces ATP from ADP in the presence of a proton or sodium gradient. F-type ATPases consist of two structural domains, F(1) containing the extramembraneous catalytic core and F(0) containing the membrane proton channel, linked together by a central stalk and a peripheral stalk. During catalysis, ATP synthesis in the catalytic domain of F(1) is coupled via a rotary mechanism of the central stalk subunits to proton translocation. Its function is as follows. This protein is part of the stalk that links CF(0) to CF(1). It either transmits conformational changes from CF(0) to CF(1) or is implicated in proton conduction. This chain is ATP synthase subunit delta, found in Bacillus velezensis (strain DSM 23117 / BGSC 10A6 / LMG 26770 / FZB42) (Bacillus amyloliquefaciens subsp. plantarum).